A 321-amino-acid polypeptide reads, in one-letter code: Glucokinase (321 aa).

Residue 8–13 participates in ATP binding; that stretch reads GDVGGT.

The protein belongs to the bacterial glucokinase family.

The protein localises to the cytoplasm. It carries out the reaction D-glucose + ATP = D-glucose 6-phosphate + ADP + H(+). The chain is Glucokinase from Psychromonas ingrahamii (strain DSM 17664 / CCUG 51855 / 37).